A 366-amino-acid chain; its full sequence is tRNA/tmRNA (uracil-C(5))-methyltransferase (366 aa).

The S-adenosyl-L-methionine site is built by Q190, Y218, N223, E239, and D299. Catalysis depends on C324, which acts as the Nucleophile. The Proton acceptor role is filled by E358.

The protein belongs to the class I-like SAM-binding methyltransferase superfamily. RNA M5U methyltransferase family. TrmA subfamily.

It carries out the reaction uridine(54) in tRNA + S-adenosyl-L-methionine = 5-methyluridine(54) in tRNA + S-adenosyl-L-homocysteine + H(+). The enzyme catalyses uridine(341) in tmRNA + S-adenosyl-L-methionine = 5-methyluridine(341) in tmRNA + S-adenosyl-L-homocysteine + H(+). Functionally, dual-specificity methyltransferase that catalyzes the formation of 5-methyluridine at position 54 (m5U54) in all tRNAs, and that of position 341 (m5U341) in tmRNA (transfer-mRNA). The protein is tRNA/tmRNA (uracil-C(5))-methyltransferase of Salmonella heidelberg (strain SL476).